An 877-amino-acid polypeptide reads, in one-letter code: Leucine--tRNA ligase (877 aa).

The 'HIGH' region motif lies at 43 to 53; sequence PYPSGRIHMGH. A 'KMSKS' region motif is present at residues 628-632; sequence KMSKS. ATP is bound at residue K631.

The protein belongs to the class-I aminoacyl-tRNA synthetase family.

The protein resides in the cytoplasm. The enzyme catalyses tRNA(Leu) + L-leucine + ATP = L-leucyl-tRNA(Leu) + AMP + diphosphate. The polypeptide is Leucine--tRNA ligase (Brucella abortus biovar 1 (strain 9-941)).